A 221-amino-acid polypeptide reads, in one-letter code: GFP-like non-fluorescent chromoprotein (221 aa).

Positions Gln-62 to Gly-64 form a cross-link, 2-iminomethyl-5-imidazolinone (Gln-Gly). Residue Tyr-63 is modified to 2,3-didehydrotyrosine.

Belongs to the GFP family. Homotetramer. In terms of processing, contains a chromophore consisting of modified amino acid residues. The chromophore is formed by autocatalytic backbone condensation between Xaa-N and Gly-(N+2), oxidation of Tyr-(N+1) to didehydrotyrosine, and formation of a double bond to the alpha-amino nitrogen of residue Xaa-N. Maturation of the chromophore requires nothing other than molecular oxygen. The precise stereochemistry of the tyrosine has not been determined.

Non-fluorescent pigment protein that is lilac in color. The polypeptide is GFP-like non-fluorescent chromoprotein (Goniopora tenuidens (Anemone coral)).